A 122-amino-acid polypeptide reads, in one-letter code: Probable transcription factor PqrA (122 aa).

In terms of domain architecture, HTH araC/xylS-type spans 7 to 107 (NDILKWLETQ…NTTPAKFREN (101 aa)). 2 DNA-binding regions (H-T-H motif) span residues 26-47 (DTIANKSGYSKWHLQRIFKDFK) and 74-97 (ILDIALMYGFSSQATFTRIFKKHF).

Functionally, upon expression in E.coli strain KY2563 confers resistance to antibiotics ofloxacin, ciprofloxacin, tetracycline, chloramphenicol, and ceftazidime (increases minimal inhibitory concentration by 8-32 times); also decreases expression of OmpF. This chain is Probable transcription factor PqrA, found in Proteus vulgaris.